We begin with the raw amino-acid sequence, 546 residues long: CTP synthase (546 aa).

The amidoligase domain stretch occupies residues 1–269 (MRSKKTKFIF…DERLAEVLNI (269 aa)). Ser-17 lines the CTP pocket. A UTP-binding site is contributed by Ser-17. ATP is bound by residues 18-23 (SLGKGL) and Asp-75. Mg(2+)-binding residues include Asp-75 and Glu-143. CTP-binding positions include 150 to 152 (DIE), 190 to 195 (KTKPTQ), and Lys-226. Residues 190-195 (KTKPTQ) and Lys-226 contribute to the UTP site. In terms of domain architecture, Glutamine amidotransferase type-1 spans 295-537 (RIAIVGKYVN…IRAALAQRDA (243 aa)). Gly-357 contributes to the L-glutamine binding site. Cys-384 functions as the Nucleophile; for glutamine hydrolysis in the catalytic mechanism. L-glutamine-binding positions include 385 to 388 (LGLQ), Glu-408, and Arg-465. Active-site residues include His-510 and Glu-512.

The protein belongs to the CTP synthase family. As to quaternary structure, homotetramer.

The catalysed reaction is UTP + L-glutamine + ATP + H2O = CTP + L-glutamate + ADP + phosphate + 2 H(+). It carries out the reaction L-glutamine + H2O = L-glutamate + NH4(+). It catalyses the reaction UTP + NH4(+) + ATP = CTP + ADP + phosphate + 2 H(+). The protein operates within pyrimidine metabolism; CTP biosynthesis via de novo pathway; CTP from UDP: step 2/2. Allosterically activated by GTP, when glutamine is the substrate; GTP has no effect on the reaction when ammonia is the substrate. The allosteric effector GTP functions by stabilizing the protein conformation that binds the tetrahedral intermediate(s) formed during glutamine hydrolysis. Inhibited by the product CTP, via allosteric rather than competitive inhibition. Functionally, catalyzes the ATP-dependent amination of UTP to CTP with either L-glutamine or ammonia as the source of nitrogen. Regulates intracellular CTP levels through interactions with the four ribonucleotide triphosphates. The sequence is that of CTP synthase from Myxococcus xanthus (strain DK1622).